Reading from the N-terminus, the 187-residue chain is GTP cyclohydrolase 1 (187 aa).

Zn(2+) is bound by residues C81, H84, and C152.

This sequence belongs to the GTP cyclohydrolase I family. In terms of assembly, homomer.

The catalysed reaction is GTP + H2O = 7,8-dihydroneopterin 3'-triphosphate + formate + H(+). The protein operates within cofactor biosynthesis; 7,8-dihydroneopterin triphosphate biosynthesis; 7,8-dihydroneopterin triphosphate from GTP: step 1/1. This is GTP cyclohydrolase 1 from Pyrobaculum neutrophilum (strain DSM 2338 / JCM 9278 / NBRC 100436 / V24Sta) (Thermoproteus neutrophilus).